The sequence spans 360 residues: MSKVFNFSAGPAMMPEAVLAQAQAELLNWQEQQTSVMEVSHRGKLFMALASQSELDLRQLYQIPDNYRILFLQGGARGQFAAIPMNLLKEKGKALYLTSGHWSATAAKEARLFGDIDEVNILEEGNELKIGQLDFSHIADQYDYVHYCPNETISGVEIFDLPKVGNAVLVADMSSNILSRKIDISQFGLIYAGAQKNLGPAGITLVIVREDLIGHARQTTPTIWNYEIQSKADSMINTPPTFAWYLCALVFKHLLSLGGIEEIEKRNQAKAQLLYDYLESTPFYRNPVAKVNRSRMNVTFTTDNDELNAKFVAEATAAGLHALKGHKVLGGMRASIYNAMPMEGVQALIAFMKQFEAENR.

Arginine 42 is a binding site for L-glutamate. Pyridoxal 5'-phosphate-binding positions include 76 to 77 (AR), tryptophan 102, threonine 152, aspartate 172, and glutamine 195. Lysine 196 bears the N6-(pyridoxal phosphate)lysine mark. 237–238 (NT) lines the pyridoxal 5'-phosphate pocket.

The protein belongs to the class-V pyridoxal-phosphate-dependent aminotransferase family. SerC subfamily. In terms of assembly, homodimer. Pyridoxal 5'-phosphate serves as cofactor.

The protein resides in the cytoplasm. The enzyme catalyses O-phospho-L-serine + 2-oxoglutarate = 3-phosphooxypyruvate + L-glutamate. It carries out the reaction 4-(phosphooxy)-L-threonine + 2-oxoglutarate = (R)-3-hydroxy-2-oxo-4-phosphooxybutanoate + L-glutamate. Its pathway is amino-acid biosynthesis; L-serine biosynthesis; L-serine from 3-phospho-D-glycerate: step 2/3. It functions in the pathway cofactor biosynthesis; pyridoxine 5'-phosphate biosynthesis; pyridoxine 5'-phosphate from D-erythrose 4-phosphate: step 3/5. Catalyzes the reversible conversion of 3-phosphohydroxypyruvate to phosphoserine and of 3-hydroxy-2-oxo-4-phosphonooxybutanoate to phosphohydroxythreonine. The protein is Phosphoserine aminotransferase of Pasteurella multocida (strain Pm70).